We begin with the raw amino-acid sequence, 372 residues long: Cyclin-dependent kinase 9 (372 aa).

In terms of domain architecture, Protein kinase spans 19–315 (YEKLAKIGQG…SDDALNHDFF (297 aa)). 25 to 33 (IGQGTFGEV) lines the ATP pocket. K44 carries the N6-acetyllysine; by EP300/CBP, PCAF/KAT2B and GCN5/KAT2A modification. Residues K48 and 104-106 (DFC) each bind ATP. K48 is subject to N6-acetyllysine; by PCAF/KAT2B and GCN5/KAT2A. D149 acts as the Proton acceptor in catalysis. Residues 166–191 (ADFGLARAFSLAKNSQPNRYTNRVVT) form a T-loop region. Residue D167 participates in ATP binding. S175 is subject to Phosphoserine. T186 is modified (phosphothreonine; by CaMK1D). Residues 343-372 (RRKGSQITQQSTNQSRNPATTNQTEFERVF) form a disordered region. At S347 the chain carries Phosphoserine; by CDK9 and PKA. A compositionally biased stretch (polar residues) spans 347–366 (SQITQQSTNQSRNPATTNQT). Residue T350 is modified to Phosphothreonine; by CDK9. At S353 the chain carries Phosphoserine; by CDK9. Position 354 is a phosphothreonine; by CDK9 (T354). A Phosphoserine; by CDK9 modification is found at S357. Phosphothreonine; by CDK9 is present on residues T362 and T363.

It belongs to the protein kinase superfamily. CMGC Ser/Thr protein kinase family. CDC2/CDKX subfamily. Component of the super elongation complex (SEC), at least composed of EAF1, EAF2, CDK9, MLLT3/AF9, AFF (AFF1 or AFF4), the P-TEFb complex and ELL (ELL, ELL2 or ELL3). Associates with CCNT1/cyclin-T1, CCNT2/cyclin-T2 (isoform A and isoform B) or CCNK/cyclin-K to form active P-TEFb. P-TEFb forms a complex with AFF4/AF5Q31 and is part of the super elongation complex (SEC). Component of a complex which is composed of at least 5 members: HTATSF1/Tat-SF1, P-TEFb complex, RNA pol II, SUPT5H, and NCL/nucleolin. Associates with UBR5 and forms a transcription regulatory complex composed of CDK9, RNAP II, UBR5 and TFIIS/TCEA1 that can stimulate target gene transcription (e.g. gamma fibrinogen/FGG) by recruiting their promoters. Component of the 7SK snRNP inactive complex which is composed of at least 8 members: P-TEFb (composed of CDK9 and CCNT1/cyclin-T1), HEXIM1, HEXIM2, LARP7, BCDIN3, SART3 proteins and 7SK and U6 snRNAs. This inactive 7SK snRNP complex can also interact with NCOR1 and HDAC3, probably to regulate CDK9 acetylation. Release of P-TEFb from P-TEFb/7SK snRNP complex requires both PP2B to transduce calcium Ca(2+) signaling in response to stimuli (e.g. UV or hexamethylene bisacetamide (HMBA)), and PPP1CA to dephosphorylate Thr-186. This released P-TEFb remains inactive in the pre-initiation complex with BRD4 until new Thr-186 phosphorylation occurs after the synthesis of a short RNA. Interacts with BRD4; to target chromatin binding. Interacts with JMJD6. Interacts with activated nuclear STAT3 and RELA/p65. Binds to AR and MYOD1. Forms a complex composed of CDK9, CCNT1/cyclin-T1, EP300 and GATA4 that stimulates hypertrophy in cardiomyocytes. The large PER complex involved in the repression of transcriptional termination is composed of at least PER2, CDK9, DDX5, DHX9, NCBP1 and POLR2A (active). Interacts with HSF1. Interacts with TBX21. Interacts with WDR43. Interacts with ZMYND8; the association appears to occur between homodimeric ZMYND8 and the activated form of the P-TEFb complex. Autophosphorylation at Thr-186, Ser-347, Thr-350, Ser-353, Thr-354 and Ser-357 triggers kinase activity by promoting cyclin and substrate binding upon conformational changes. Thr-186 phosphorylation requires the calcium Ca(2+) signaling pathway, including CaMK1D and calmodulin. This inhibition is relieved by Thr-29 dephosphorylation. Phosphorylation at Ser-175 inhibits kinase activity. Can be phosphorylated on either Thr-362 or Thr-363 but not on both simultaneously. Post-translationally, dephosphorylation of Thr-186 by PPM1A and PPM1B blocks CDK9 activity and may lead to CDK9 proteasomal degradation. However, PPP1CA-mediated Thr-186 dephosphorylation is required to release P-TEFb from its inactive P-TEFb/7SK snRNP complex. Dephosphorylated at Ser-347 by the PNUTS-PP1 complex during RNA polymerase II transcription pause-release. Dephosphorylation of C-terminus Thr and Ser residues by protein phosphatase-1 (PP1) triggers CDK9 activity. In terms of processing, N6-acetylation of Lys-44 promotes kinase activity, whereas acetylation of both Lys-44 and Lys-48 mediated by PCAF/KAT2B and GCN5/KAT2A reduces kinase activity. The acetylated form associates with PML bodies in the nuclear matrix and with the transcriptionally silent HIV-1 genome; deacetylated upon transcription stimulation. Deacetylated by SIRT7, promoting the kinase activity and subsequent 'Ser-2' phosphorylation of the C-terminal domain (CTD) of RNA polymerase II. Polyubiquitinated and thus activated by UBR5. This ubiquitination is promoted by TFIIS/TCEA1 and favors 'Ser-2' phosphorylation of RPB1/POLR2A CTD. In terms of tissue distribution, expressed at high levels in brain and kidney.

Its subcellular location is the nucleus. The protein localises to the cytoplasm. It is found in the PML body. The enzyme catalyses L-seryl-[protein] + ATP = O-phospho-L-seryl-[protein] + ADP + H(+). It carries out the reaction L-threonyl-[protein] + ATP = O-phospho-L-threonyl-[protein] + ADP + H(+). It catalyses the reaction [DNA-directed RNA polymerase] + ATP = phospho-[DNA-directed RNA polymerase] + ADP + H(+). With respect to regulation, activation by Thr-186 phosphorylation is calcium Ca(2+) signaling pathway-dependent; actively inactivated by dephosphorylation mediated by PPP1CA, PPM1A and PPM1B. Reversibly repressed by acetylation at Lys-44 and Lys-48. Its function is as follows. Protein kinase involved in the regulation of transcription. Member of the cyclin-dependent kinase pair (CDK9/cyclin-T) complex, also called positive transcription elongation factor b (P-TEFb), which facilitates the transition from abortive to productive elongation by phosphorylating the CTD (C-terminal domain) of the large subunit of RNA polymerase II (RNAP II) POLR2A, SUPT5H and RDBP. This complex is inactive when in the 7SK snRNP complex form. Phosphorylates EP300, MYOD1, RPB1/POLR2A and AR and the negative elongation factors DSIF and NELFE. Regulates cytokine inducible transcription networks by facilitating promoter recognition of target transcription factors (e.g. TNF-inducible RELA/p65 activation and IL-6-inducible STAT3 signaling). Promotes RNA synthesis in genetic programs for cell growth, differentiation and viral pathogenesis. P-TEFb is also involved in cotranscriptional histone modification, mRNA processing and mRNA export. Modulates a complex network of chromatin modifications including histone H2B monoubiquitination (H2Bub1), H3 lysine 4 trimethylation (H3K4me3) and H3K36me3; integrates phosphorylation during transcription with chromatin modifications to control co-transcriptional histone mRNA processing. The CDK9/cyclin-K complex has also a kinase activity towards CTD of RNAP II and can substitute for CDK9/cyclin-T P-TEFb in vitro. Replication stress response protein; the CDK9/cyclin-K complex is required for genome integrity maintenance, by promoting cell cycle recovery from replication arrest and limiting single-stranded DNA amount in response to replication stress, thus reducing the breakdown of stalled replication forks and avoiding DNA damage. In addition, probable function in DNA repair of isoform 2 via interaction with KU70/XRCC6. Promotes cardiac myocyte enlargement. RPB1/POLR2A phosphorylation on 'Ser-2' in CTD activates transcription. AR phosphorylation modulates AR transcription factor promoter selectivity and cell growth. DSIF and NELF phosphorylation promotes transcription by inhibiting their negative effect. The phosphorylation of MYOD1 enhances its transcriptional activity and thus promotes muscle differentiation. Catalyzes phosphorylation of KAT5, promoting KAT5 recruitment to chromatin and histone acetyltransferase activity. In Mus musculus (Mouse), this protein is Cyclin-dependent kinase 9 (Cdk9).